We begin with the raw amino-acid sequence, 346 residues long: Phosphate-binding protein PstS (346 aa).

Residues Met1 to Ala25 form the signal peptide. Phosphate-binding positions include Ala34–Phe36, Ser63, Asp81, and Ser164–Thr166.

Belongs to the PstS family. In terms of assembly, the complex is composed of two ATP-binding proteins (PstB), two transmembrane proteins (PstC and PstA) and a solute-binding protein (PstS).

The protein resides in the periplasm. Functionally, part of the ABC transporter complex PstSACB involved in phosphate import. The polypeptide is Phosphate-binding protein PstS (pstS) (Escherichia coli (strain K12)).